We begin with the raw amino-acid sequence, 451 residues long: Probable carboxypeptidase PMAA_093910 (451 aa).

The first 19 residues, 1–19 (MKVSSLLPSVLLLVGATRA), serve as a signal peptide directing secretion. An N-linked (GlcNAc...) asparagine glycan is attached at Asn-149. Position 171 (Asp-171) interacts with Zn(2+). Catalysis depends on Glu-203, which acts as the Proton acceptor. Glu-204 lines the Zn(2+) pocket. The N-linked (GlcNAc...) asparagine glycan is linked to Asn-354.

Belongs to the peptidase M20A family. It depends on Zn(2+) as a cofactor.

The protein resides in the secreted. This is Probable carboxypeptidase PMAA_093910 from Talaromyces marneffei (strain ATCC 18224 / CBS 334.59 / QM 7333) (Penicillium marneffei).